Here is a 251-residue protein sequence, read N- to C-terminus: MNLNSIPAFDDNYIWVLNDEAGRCLIVDPGDAEPVLNAIAANNWQPEAIFLTHHHHDHVGGVKELVEKFPQIVVYGPQETQDKGTTQVVKDGETAFVLGHEFSVIATPGHTLGHICYFSKPYLFCGDTLFSGGCGRLFEGTASQMYQSLNKLSALPDDTLVCCAHEYTLSNMKFALSILPHDLSINDYYRKVKELRAKNQITLPVILKNERQINVFLRTEDIDLINVINEETLLQQPEERFAWLRSKKDRF.

Zn(2+)-binding residues include H53, H55, D57, H58, H110, D127, and H165.

Belongs to the metallo-beta-lactamase superfamily. Glyoxalase II family. In terms of assembly, monomer. The cofactor is Zn(2+).

The catalysed reaction is an S-(2-hydroxyacyl)glutathione + H2O = a 2-hydroxy carboxylate + glutathione + H(+). The protein operates within secondary metabolite metabolism; methylglyoxal degradation; (R)-lactate from methylglyoxal: step 2/2. Its function is as follows. Thiolesterase that catalyzes the hydrolysis of S-D-lactoyl-glutathione to form glutathione and D-lactic acid. The chain is Hydroxyacylglutathione hydrolase from Shigella boydii serotype 18 (strain CDC 3083-94 / BS512).